The primary structure comprises 319 residues: ATP-dependent 6-phosphofructokinase (319 aa).

An ATP-binding site is contributed by Gly-11. ADP is bound at residue 21–25 (RAVVR). Residues 72-73 (RC) and 102-105 (GDGS) contribute to the ATP site. Position 103 (Asp-103) interacts with Mg(2+). Substrate is bound at residue 125-127 (TID). Catalysis depends on Asp-127, which acts as the Proton acceptor. Residue Arg-154 participates in ADP binding. Substrate is bound by residues Arg-162 and 169–171 (MGR). ADP is bound by residues 185-187 (GAE), Lys-211, and 213-215 (KMH). Residues Glu-222, Arg-243, and 249-252 (HIQR) contribute to the substrate site.

Belongs to the phosphofructokinase type A (PFKA) family. ATP-dependent PFK group I subfamily. Prokaryotic clade 'B1' sub-subfamily. Homotetramer. Requires Mg(2+) as cofactor.

It is found in the cytoplasm. It carries out the reaction beta-D-fructose 6-phosphate + ATP = beta-D-fructose 1,6-bisphosphate + ADP + H(+). Its pathway is carbohydrate degradation; glycolysis; D-glyceraldehyde 3-phosphate and glycerone phosphate from D-glucose: step 3/4. Allosterically activated by ADP and other diphosphonucleosides, and allosterically inhibited by phosphoenolpyruvate. In terms of biological role, catalyzes the phosphorylation of D-fructose 6-phosphate to fructose 1,6-bisphosphate by ATP, the first committing step of glycolysis. This chain is ATP-dependent 6-phosphofructokinase, found in Clostridium botulinum (strain ATCC 19397 / Type A).